Consider the following 383-residue polypeptide: Dephospho-CoA kinase (383 aa).

The DPCK domain maps to 3–201 (RIGLTGGMGA…RRLVPFERNL (199 aa)). 11–16 (GAGKST) contacts ATP. The segment at 196–383 (PFERNLRAAT…EVAERLLGTV (188 aa)) is UPF0157.

In the N-terminal section; belongs to the CoaE family. The protein in the C-terminal section; belongs to the UPF0157 (GrpB) family.

It localises to the cytoplasm. The catalysed reaction is 3'-dephospho-CoA + ATP = ADP + CoA + H(+). It functions in the pathway cofactor biosynthesis; coenzyme A biosynthesis; CoA from (R)-pantothenate: step 5/5. Its function is as follows. Catalyzes the phosphorylation of the 3'-hydroxyl group of dephosphocoenzyme A to form coenzyme A. The polypeptide is Dephospho-CoA kinase (Nocardia farcinica (strain IFM 10152)).